A 104-amino-acid polypeptide reads, in one-letter code: SPbeta prophage-derived stress response protein SCP1 (104 aa).

It localises to the cytoplasm. This Bacillus subtilis (strain 168) protein is SPbeta prophage-derived stress response protein SCP1 (yorD).